We begin with the raw amino-acid sequence, 248 residues long: 23S rRNA (guanosine-2'-O-)-methyltransferase RlmB (248 aa).

S-adenosyl-L-methionine contacts are provided by Gly198, Leu218, and Leu227.

It belongs to the class IV-like SAM-binding methyltransferase superfamily. RNA methyltransferase TrmH family. RlmB subfamily.

The protein localises to the cytoplasm. The enzyme catalyses guanosine(2251) in 23S rRNA + S-adenosyl-L-methionine = 2'-O-methylguanosine(2251) in 23S rRNA + S-adenosyl-L-homocysteine + H(+). Specifically methylates the ribose of guanosine 2251 in 23S rRNA. This chain is 23S rRNA (guanosine-2'-O-)-methyltransferase RlmB, found in Pseudomonas putida (strain ATCC 47054 / DSM 6125 / CFBP 8728 / NCIMB 11950 / KT2440).